Here is a 26-residue protein sequence, read N- to C-terminus: Acyl carrier protein (26 aa).

Positions 2 to 26 constitute a Carrier domain; the sequence is SDTATRVQKIVVEHLGVESDKVTQE.

This sequence belongs to the acyl carrier protein (ACP) family. In terms of processing, 4'-phosphopantetheine is transferred from CoA to a specific serine of apo-ACP by AcpS. This modification is essential for activity because fatty acids are bound in thioester linkage to the sulfhydryl of the prosthetic group.

The protein localises to the cytoplasm. The protein operates within lipid metabolism; fatty acid biosynthesis. Its function is as follows. Carrier of the growing fatty acid chain in fatty acid biosynthesis. The sequence is that of Acyl carrier protein (acpP) from Erythrobacter longus.